The sequence spans 465 residues: Sensor histidine kinase ZraS (465 aa).

At 1–14 the chain is on the cytoplasmic side; it reads MSFIRLHKDAAAMW. A helical transmembrane segment spans residues 15 to 35; that stretch reads LSRLLPAAIFILVGLFSIMVI. The Periplasmic segment spans residues 36 to 203; that stretch reads RDYGRESAAA…ATQAREWRNT (168 aa). Residues 204–224 form a helical membrane-spanning segment; sequence LIVLSALAAVLLATLLAFFWY. Over 225–465 the chain is Cytoplasmic; the sequence is QRYQRSHREL…WLPVIARQQD (241 aa). Residues 253 to 461 form the Histidine kinase domain; that stretch reads GVAHEIRNPL…VFTIWLPVIA (209 aa). A Phosphohistidine; by autocatalysis modification is found at histidine 256.

Autophosphorylated.

Its subcellular location is the cell inner membrane. It carries out the reaction ATP + protein L-histidine = ADP + protein N-phospho-L-histidine.. Activity of the ZraS/ZraR two-component system is repressed by the zinc-bound form of ZraP, which probably interacts with the periplasmic region of ZraS. Its function is as follows. Part of the Zra signaling pathway, an envelope stress response (ESR) system composed of the periplasmic accessory protein ZraP, the histidine kinase ZraS and the transcriptional regulator ZraR. The ZraPSR system contributes to antibiotic resistance and is important for membrane integrity in the presence of membrane-targeting biocides. ZraS is a member of the two-component regulatory system ZraS/ZraR. Functions as a membrane-associated sensor kinase that phosphorylates ZraR in response to high concentrations of Zn(2+) or Pb(2+) in the medium. In Salmonella typhi, this protein is Sensor histidine kinase ZraS (zraS).